We begin with the raw amino-acid sequence, 452 residues long: Na(+)/H(+) antiporter NhaA (452 aa).

Transmembrane regions (helical) follow at residues 23 to 43, 71 to 91, 108 to 128, 136 to 156, 165 to 185, 189 to 209, 216 to 236, 316 to 336, 349 to 369, 385 to 405, and 418 to 438; these read MMLFLASVLAVIMANSSLSTI, LLQFVNDVLMVIFFLAVGLEI, LPIVGAIGGMIVPVLFFLLVV, GAAIPMSTDIAFALAALAVLG, VFLTALAVADDIGGIIVIALF, HINIGMLAIAFGILFIMYLMG, LGLYFVCTFFVWLFFLQSGIH, IVGYFVLPLFAFANAGITLGG, VFLGLFVGKPLGIYFFTYGFV, LMAVSLFGGIGFTVSLFIATL, and EAKLGIFVASIFAAVVGIVTL.

Belongs to the NhaA Na(+)/H(+) (TC 2.A.33) antiporter family.

It localises to the cell inner membrane. The enzyme catalyses Na(+)(in) + 2 H(+)(out) = Na(+)(out) + 2 H(+)(in). Na(+)/H(+) antiporter that extrudes sodium in exchange for external protons. The polypeptide is Na(+)/H(+) antiporter NhaA (Porphyromonas gingivalis (strain ATCC 33277 / DSM 20709 / CIP 103683 / JCM 12257 / NCTC 11834 / 2561)).